The sequence spans 101 residues: NAD(P)H-quinone oxidoreductase subunit 4L, chloroplastic (101 aa).

Helical transmembrane passes span 2–22 (MLEH…YGLI), 32–52 (MCLE…SDLF), and 61–81 (IFSI…PAIV).

The protein belongs to the complex I subunit 4L family. NDH is composed of at least 16 different subunits, 5 of which are encoded in the nucleus.

The protein localises to the plastid. It localises to the chloroplast thylakoid membrane. The enzyme catalyses a plastoquinone + NADH + (n+1) H(+)(in) = a plastoquinol + NAD(+) + n H(+)(out). It catalyses the reaction a plastoquinone + NADPH + (n+1) H(+)(in) = a plastoquinol + NADP(+) + n H(+)(out). NDH shuttles electrons from NAD(P)H:plastoquinone, via FMN and iron-sulfur (Fe-S) centers, to quinones in the photosynthetic chain and possibly in a chloroplast respiratory chain. The immediate electron acceptor for the enzyme in this species is believed to be plastoquinone. Couples the redox reaction to proton translocation, and thus conserves the redox energy in a proton gradient. The chain is NAD(P)H-quinone oxidoreductase subunit 4L, chloroplastic from Illicium oligandrum (Star anise).